The sequence spans 377 residues: Homoserine O-succinyltransferase (377 aa).

Residues 50 to 359 (NAVLVCHALS…SSHGHDSFLM (310 aa)) enclose the AB hydrolase-1 domain. S156 serves as the catalytic Nucleophile. R226 provides a ligand contact to substrate. Active-site residues include D321 and H354. Substrate is bound at residue D355.

This sequence belongs to the AB hydrolase superfamily. MetX family. As to quaternary structure, homodimer.

The protein resides in the cytoplasm. The enzyme catalyses L-homoserine + succinyl-CoA = O-succinyl-L-homoserine + CoA. Its pathway is amino-acid biosynthesis; L-methionine biosynthesis via de novo pathway; O-succinyl-L-homoserine from L-homoserine: step 1/1. Its function is as follows. Transfers a succinyl group from succinyl-CoA to L-homoserine, forming succinyl-L-homoserine. This Nitrosospira multiformis (strain ATCC 25196 / NCIMB 11849 / C 71) protein is Homoserine O-succinyltransferase.